A 520-amino-acid polypeptide reads, in one-letter code: GMP synthase [glutamine-hydrolyzing] (520 aa).

Residues 4–202 (KILILDFGSQ…VHDICGCGSD (199 aa)) enclose the Glutamine amidotransferase type-1 domain. Cys-81 (nucleophile) is an active-site residue. Active-site residues include His-176 and Glu-178. In terms of domain architecture, GMPS ATP-PPase spans 203-395 (WNMPDYVEEA…LGLPHDMVYR (193 aa)). 230–236 (SGGVDSS) serves as a coordination point for ATP.

In terms of assembly, homodimer.

The catalysed reaction is XMP + L-glutamine + ATP + H2O = GMP + L-glutamate + AMP + diphosphate + 2 H(+). It functions in the pathway purine metabolism; GMP biosynthesis; GMP from XMP (L-Gln route): step 1/1. Functionally, catalyzes the synthesis of GMP from XMP. The sequence is that of GMP synthase [glutamine-hydrolyzing] from Thiobacillus denitrificans (strain ATCC 25259 / T1).